Reading from the N-terminus, the 353-residue chain is MTIALGKVTKDENDLFDIMDDWLRRDRFVFVGWSGLLLFPCAYFAVGGWFTGTTFVTSWYTHGLASSYLEGCNFLTAAVSTPANSLAHSLLLLWGPEAQGDFTRWCQLGGLWTFVALHGAFGLIGFMLRQFELARSVQLRPYNAIAFSGPIAVFVSVFLIYPLGQSGWFFAPSFGVAAIFRFILFFQGFHNWTLNPFHMMGVAGVLGAALLCAIHGATVENTLFEDGDGANTFRAFNPTQAEETYSMVTANRFWSQIFGVAFSNKRWLHFFMLFVPVTGLWMSALGVVGLALNLRAYDFVSQEIRAAEDPEFETFYTKNILLNEGIRAWMAAQDQPHENLIFPEEVLPRGNAL.

N-acetylthreonine is present on T2. T2 carries the post-translational modification Phosphothreonine. Residues C41–T61 traverse the membrane as a helical segment. Residue H118 coordinates chlorophyll a. A helical transmembrane segment spans residues G125 to P141. The pheophytin a site is built by Q130 and N143. A helical transmembrane segment spans residues V153–S166. H198 contributes to the chlorophyll a binding site. Residues A208–D228 traverse the membrane as a helical segment. H215 and F262 together coordinate a plastoquinone. H215 serves as a coordination point for Fe cation. H269 is a Fe cation binding site. A helical membrane pass occupies residues G279–R295.

The protein belongs to the reaction center PufL/M/PsbA/D family. As to quaternary structure, PSII is composed of 1 copy each of membrane proteins PsbA, PsbB, PsbC, PsbD, PsbE, PsbF, PsbH, PsbI, PsbJ, PsbK, PsbL, PsbM, PsbT, PsbX, PsbY, PsbZ, Psb30/Ycf12, at least 3 peripheral proteins of the oxygen-evolving complex and a large number of cofactors. It forms dimeric complexes. It depends on The D1/D2 heterodimer binds P680, chlorophylls that are the primary electron donor of PSII, and subsequent electron acceptors. It shares a non-heme iron and each subunit binds pheophytin, quinone, additional chlorophylls, carotenoids and lipids. There is also a Cl(-1) ion associated with D1 and D2, which is required for oxygen evolution. The PSII complex binds additional chlorophylls, carotenoids and specific lipids. as a cofactor.

The protein localises to the plastid. Its subcellular location is the chloroplast thylakoid membrane. It carries out the reaction 2 a plastoquinone + 4 hnu + 2 H2O = 2 a plastoquinol + O2. Its function is as follows. Photosystem II (PSII) is a light-driven water:plastoquinone oxidoreductase that uses light energy to abstract electrons from H(2)O, generating O(2) and a proton gradient subsequently used for ATP formation. It consists of a core antenna complex that captures photons, and an electron transfer chain that converts photonic excitation into a charge separation. The D1/D2 (PsbA/PsbD) reaction center heterodimer binds P680, the primary electron donor of PSII as well as several subsequent electron acceptors. D2 is needed for assembly of a stable PSII complex. This is Photosystem II D2 protein from Lactuca sativa (Garden lettuce).